The primary structure comprises 559 residues: Vacuolar protein 8 (559 aa).

A lipid anchor (N-myristoyl glycine) is attached at Gly-2. Residue Cys-4 is the site of S-palmitoyl cysteine attachment. ARM repeat units lie at residues 77 to 116, 118 to 157, 159 to 198, 200 to 239, 243 to 282, 284 to 323, 325 to 365, and 409 to 448; these read TERDVREVDRDTLEPILFLLQSPDIEVQRAASAALGNLAV, TENKVLIVQLGGLTPLIRQMMSPNVEVQCNAVGCITNLAT, EENKAKIARSGALGPLTRLAKSRDMRVQRNATGALLNMTH, DENRQQLVNAGAIPVLVQLLSSPDVDVQYYCTTALSNIAV, NRRKLAQSEPKLVQSLVNLMDSTSPKVQCQAALALRNLAS, EKYQLDIVRANGLHPLLRLLQSSYLPLILSAVACIRNISI, PMNE…NLAA, and DDLKSHLLNLGVCGVLIPLTHSPSIEVQGNSAAALGNLSS.

It belongs to the beta-catenin family.

The protein resides in the vacuole membrane. Its function is as follows. Functions in both vacuole inheritance and protein targeting from the cytoplasm to vacuole. This is Vacuolar protein 8 (VAC8) from Gibberella zeae (strain ATCC MYA-4620 / CBS 123657 / FGSC 9075 / NRRL 31084 / PH-1) (Wheat head blight fungus).